Consider the following 148-residue polypeptide: 3-dehydroquinate dehydratase (148 aa).

The Proton acceptor role is filled by Tyr23. 3 residues coordinate substrate: Asn75, His81, and Asp88. The active-site Proton donor is the His101. Substrate is bound by residues 102–103 and Arg112; that span reads LS.

It belongs to the type-II 3-dehydroquinase family. Homododecamer.

It catalyses the reaction 3-dehydroquinate = 3-dehydroshikimate + H2O. Its pathway is metabolic intermediate biosynthesis; chorismate biosynthesis; chorismate from D-erythrose 4-phosphate and phosphoenolpyruvate: step 3/7. Functionally, catalyzes a trans-dehydration via an enolate intermediate. The chain is 3-dehydroquinate dehydratase from Xanthomonas axonopodis pv. citri (strain 306).